Reading from the N-terminus, the 179-residue chain is Adenine phosphoribosyltransferase (179 aa).

The protein belongs to the purine/pyrimidine phosphoribosyltransferase family. In terms of assembly, homodimer.

The protein resides in the cytoplasm. It carries out the reaction AMP + diphosphate = 5-phospho-alpha-D-ribose 1-diphosphate + adenine. The protein operates within purine metabolism; AMP biosynthesis via salvage pathway; AMP from adenine: step 1/1. Its function is as follows. Catalyzes a salvage reaction resulting in the formation of AMP, that is energically less costly than de novo synthesis. In Helicobacter pylori (strain HPAG1), this protein is Adenine phosphoribosyltransferase.